The following is a 129-amino-acid chain: Glycine cleavage system H protein (129 aa).

One can recognise a Lipoyl-binding domain in the interval 24–106; that stretch reads IATIGITEFA…YGEGWFLKVR (83 aa). Lysine 65 carries the post-translational modification N6-lipoyllysine.

The protein belongs to the GcvH family. As to quaternary structure, the glycine cleavage system is composed of four proteins: P, T, L and H. (R)-lipoate serves as cofactor.

The glycine cleavage system catalyzes the degradation of glycine. The H protein shuttles the methylamine group of glycine from the P protein to the T protein. The chain is Glycine cleavage system H protein from Nostoc punctiforme (strain ATCC 29133 / PCC 73102).